We begin with the raw amino-acid sequence, 737 residues long: Autophagy-related protein 22 (737 aa).

The interval 115-154 (RMSPANAGDNSDSYPYGDDTDGDSSSGLPPPRYPGDDTRP) is disordered. Over residues 125–141 (SDSYPYGDDTDGDSSSG) the composition is skewed to low complexity. 4 helical membrane passes run 166–186 (YAFA…PILL), 232–252 (SFAM…VVSI), 264–284 (KLLL…IFIS), and 289–309 (LIGA…FVLL). Positions 327–353 (GDYGSPGYATTEEGDDEDDEYQEDSTR) are disordered. Residues 338-349 (EEGDDEDDEYQE) are compositionally biased toward acidic residues. Asparagine 354 carries an N-linked (GlcNAc...) asparagine glycan. Residues 395 to 415 (GIGIGYIAGLFLQCVAIAILI) traverse the membrane as a helical segment. The N-linked (GlcNAc...) asparagine glycan is linked to asparagine 419. Helical transmembrane passes span 426–446 (IVLC…AMWL), 487–507 (LVDI…IATT), 524–544 (WALG…AFSW), 559–579 (ILAC…GYLP), 593–613 (WEMY…SGYC), 632–652 (LYAI…GAII), and 661–681 (AFWF…FINV).

This sequence belongs to the ATG22 family.

The protein resides in the vacuole membrane. Vacuolar effluxer which mediate the efflux of amino acids resulting from autophagic degradation. The release of autophagic amino acids allows the maintenance of protein synthesis and viability during nitrogen starvation. The polypeptide is Autophagy-related protein 22 (apg-11) (Neurospora crassa (strain ATCC 24698 / 74-OR23-1A / CBS 708.71 / DSM 1257 / FGSC 987)).